We begin with the raw amino-acid sequence, 518 residues long: Probable malate:quinone oxidoreductase (518 aa).

Positions 495–518 are disordered; the sequence is GAIPATTDGQSTAGTEHTPTAATV. Residues 501–518 show a composition bias toward polar residues; sequence TDGQSTAGTEHTPTAATV.

It belongs to the MQO family. It depends on FAD as a cofactor.

It carries out the reaction (S)-malate + a quinone = a quinol + oxaloacetate. It participates in carbohydrate metabolism; tricarboxylic acid cycle; oxaloacetate from (S)-malate (quinone route): step 1/1. The protein is Probable malate:quinone oxidoreductase of Mycolicibacterium gilvum (strain PYR-GCK) (Mycobacterium gilvum (strain PYR-GCK)).